We begin with the raw amino-acid sequence, 457 residues long: Tubulin beta chain (457 aa).

Residues Gln-11, Glu-69, Ser-138, Gly-142, Thr-143, Gly-144, Asn-204, and Asn-226 each coordinate GTP. Residue Glu-69 participates in Mg(2+) binding. Residues Ser-278 and Ser-280 each carry the phosphoserine modification. Residues 423–457 form a disordered region; the sequence is QQYQEATVEDDEEVDENGDFGAPQNQDEPITENFE. Acidic residues predominate over residues 429 to 440; sequence TVEDDEEVDENG.

The protein belongs to the tubulin family. As to quaternary structure, dimer of alpha and beta chains. A typical microtubule is a hollow water-filled tube with an outer diameter of 25 nm and an inner diameter of 15 nM. Alpha-beta heterodimers associate head-to-tail to form protofilaments running lengthwise along the microtubule wall with the beta-tubulin subunit facing the microtubule plus end conferring a structural polarity. Microtubules usually have 13 protofilaments but different protofilament numbers can be found in some organisms and specialized cells. The cofactor is Mg(2+).

It localises to the cytoplasm. The protein resides in the cytoskeleton. Its function is as follows. Tubulin is the major constituent of microtubules, a cylinder consisting of laterally associated linear protofilaments composed of alpha- and beta-tubulin heterodimers. Microtubules grow by the addition of GTP-tubulin dimers to the microtubule end, where a stabilizing cap forms. Below the cap, tubulin dimers are in GDP-bound state, owing to GTPase activity of alpha-tubulin. This chain is Tubulin beta chain (TUB2), found in Saccharomyces cerevisiae (strain ATCC 204508 / S288c) (Baker's yeast).